The sequence spans 176 residues: Ribosome maturation factor RimM (176 aa).

The PRC barrel domain occupies E97–F176.

It belongs to the RimM family. Binds ribosomal protein uS19.

It localises to the cytoplasm. In terms of biological role, an accessory protein needed during the final step in the assembly of 30S ribosomal subunit, possibly for assembly of the head region. Essential for efficient processing of 16S rRNA. May be needed both before and after RbfA during the maturation of 16S rRNA. It has affinity for free ribosomal 30S subunits but not for 70S ribosomes. The sequence is that of Ribosome maturation factor RimM from Shewanella loihica (strain ATCC BAA-1088 / PV-4).